Reading from the N-terminus, the 335-residue chain is MIEFQQVHKTYRVAGREIPALNPTSLTIEDGQVFGLIGHSGAGKSTMLRLINRLEEPSGGTIIVDGEDVTAFNASQLRGFRQQVGMIFQHFNLLASKTVADNVALPLALAGELSRSEIDKRVTELLARVGLSDHAKKYPAQLSGGQKQRVGIARALSTNPKILLCDEATSALDPQTTASVLQLLAEINRELKLTIVLITHEMDVIRRVCDRVAVMDAGQIVEQGSVAEVFLHPQHPTTKRFVQEDEQVDEGEQRDDFAHVPGRIVRLTFQGDATYAPLLGTVARETGVDYSILAGRIDRIKDVPYGQLTLALIGGDMEAAFARFKAADVHMEVLR.

An ABC transporter domain is found at 2–242 (IEFQQVHKTY…PQHPTTKRFV (241 aa)). 38–45 (GHSGAGKS) contacts ATP.

The protein belongs to the ABC transporter superfamily. Methionine importer (TC 3.A.1.24) family. The complex is composed of two ATP-binding proteins (MetN), two transmembrane proteins (MetI) and a solute-binding protein (MetQ).

The protein localises to the cell inner membrane. The enzyme catalyses L-methionine(out) + ATP + H2O = L-methionine(in) + ADP + phosphate + H(+). It carries out the reaction D-methionine(out) + ATP + H2O = D-methionine(in) + ADP + phosphate + H(+). Functionally, part of the ABC transporter complex MetNIQ involved in methionine import. Responsible for energy coupling to the transport system. The polypeptide is Methionine import ATP-binding protein MetN 1 (Pseudomonas putida (strain ATCC 47054 / DSM 6125 / CFBP 8728 / NCIMB 11950 / KT2440)).